The following is a 127-amino-acid chain: Large ribosomal subunit protein bL20 (127 aa).

The protein belongs to the bacterial ribosomal protein bL20 family.

Functionally, binds directly to 23S ribosomal RNA and is necessary for the in vitro assembly process of the 50S ribosomal subunit. It is not involved in the protein synthesizing functions of that subunit. The protein is Large ribosomal subunit protein bL20 of Streptomyces avermitilis (strain ATCC 31267 / DSM 46492 / JCM 5070 / NBRC 14893 / NCIMB 12804 / NRRL 8165 / MA-4680).